A 663-amino-acid polypeptide reads, in one-letter code: uncharacterized protein (663 aa).

Positions methionine 1–alanine 29 are cleaved as a signal peptide.

It belongs to the bacterial solute-binding protein 5 family.

The protein localises to the periplasm. Its function is as follows. Possible binding-protein with either a transport or enzymatic activity. This is an uncharacterized protein from Sinorhizobium fredii (strain NBRC 101917 / NGR234).